A 268-amino-acid chain; its full sequence is Indole-3-glycerol phosphate synthase (268 aa).

This sequence belongs to the TrpC family.

It catalyses the reaction 1-(2-carboxyphenylamino)-1-deoxy-D-ribulose 5-phosphate + H(+) = (1S,2R)-1-C-(indol-3-yl)glycerol 3-phosphate + CO2 + H2O. It functions in the pathway amino-acid biosynthesis; L-tryptophan biosynthesis; L-tryptophan from chorismate: step 4/5. This chain is Indole-3-glycerol phosphate synthase, found in Acinetobacter baumannii (strain SDF).